A 169-amino-acid chain; its full sequence is Ureidoglycolate lyase (169 aa).

Belongs to the ureidoglycolate lyase family. As to quaternary structure, homodimer. Ni(2+) serves as cofactor.

The enzyme catalyses (S)-ureidoglycolate = urea + glyoxylate. It functions in the pathway nitrogen metabolism; (S)-allantoin degradation. Its function is as follows. Catalyzes the catabolism of the allantoin degradation intermediate (S)-ureidoglycolate, generating urea and glyoxylate. Involved in the utilization of allantoin as nitrogen source. The chain is Ureidoglycolate lyase from Brucella melitensis biotype 2 (strain ATCC 23457).